The sequence spans 382 residues: tRNA-specific 2-thiouridylase MnmA (382 aa).

Residues 34 to 41 (AMSGGVDS) and Leu60 each bind ATP. Residue Cys128 is the Nucleophile of the active site. The cysteines at positions 128 and 224 are disulfide-linked. Position 152 (Gly152) interacts with ATP. The tract at residues 174-176 (RDQ) is interaction with tRNA. The active-site Cysteine persulfide intermediate is the Cys224.

This sequence belongs to the MnmA/TRMU family.

Its subcellular location is the cytoplasm. The enzyme catalyses S-sulfanyl-L-cysteinyl-[protein] + uridine(34) in tRNA + AH2 + ATP = 2-thiouridine(34) in tRNA + L-cysteinyl-[protein] + A + AMP + diphosphate + H(+). In terms of biological role, catalyzes the 2-thiolation of uridine at the wobble position (U34) of tRNA, leading to the formation of s(2)U34. The chain is tRNA-specific 2-thiouridylase MnmA from Sphingopyxis alaskensis (strain DSM 13593 / LMG 18877 / RB2256) (Sphingomonas alaskensis).